A 248-amino-acid chain; its full sequence is Proteasome subunit alpha (248 aa).

The protein belongs to the peptidase T1A family. As to quaternary structure, the 20S proteasome core is composed of 14 alpha and 14 beta subunits that assemble into four stacked heptameric rings, resulting in a barrel-shaped structure. The two inner rings, each composed of seven catalytic beta subunits, are sandwiched by two outer rings, each composed of seven alpha subunits. The catalytic chamber with the active sites is on the inside of the barrel. Has a gated structure, the ends of the cylinder being occluded by the N-termini of the alpha-subunits. Is capped at one or both ends by the proteasome regulatory ATPase, PAN.

It is found in the cytoplasm. The formation of the proteasomal ATPase PAN-20S proteasome complex, via the docking of the C-termini of PAN into the intersubunit pockets in the alpha-rings, triggers opening of the gate for substrate entry. Interconversion between the open-gate and close-gate conformations leads to a dynamic regulation of the 20S proteasome proteolysis activity. Component of the proteasome core, a large protease complex with broad specificity involved in protein degradation. In Methanothermobacter thermautotrophicus (strain ATCC 29096 / DSM 1053 / JCM 10044 / NBRC 100330 / Delta H) (Methanobacterium thermoautotrophicum), this protein is Proteasome subunit alpha.